The chain runs to 380 residues: MKVFKQQLEQLGAQNQYRSIPDLIHQGRYITRENCKMLNMSSNDYLGLASDENLRRSFLQQYGGNFPSFTSSSSRLLTGNFPIYTDLEELVAQRFQRESALLFNSGYHANLGILPALTTTKSLILADKFVHASMIDGIRLSRCAFFRYRHNDYEHLKNLLEKNVGKFDRTFIVTESVFSMDGDVADLKQLVQLKKQFPNTYLYVDEAHAIGVYGQNGLGIAERDNLIAEIDLLVGTFGKALASVGAYAVCNQVLKECLINQMRPLIFSTALPPFNVAWTYFIFERLPQFSKERSHLEQLSAFLRREVAHRTQIMPSQTCIVPYILGGNEATLAKAEYLQRQGYYCLPIRPPTVPKGTSRIRLSLTADMTMDEVRQFAACL.

Arg18 is a substrate binding site. A pyridoxal 5'-phosphate-binding site is contributed by 106 to 107; that stretch reads GY. His131 provides a ligand contact to substrate. Pyridoxal 5'-phosphate-binding positions include Ser179, 205 to 208, and 236 to 239; these read DEAH and TFGK. Residue Lys239 is modified to N6-(pyridoxal phosphate)lysine. Position 352 (Thr352) interacts with substrate.

Belongs to the class-II pyridoxal-phosphate-dependent aminotransferase family. BioF subfamily. Homodimer. The cofactor is pyridoxal 5'-phosphate.

It carries out the reaction 6-carboxyhexanoyl-[ACP] + L-alanine + H(+) = (8S)-8-amino-7-oxononanoate + holo-[ACP] + CO2. Its pathway is cofactor biosynthesis; biotin biosynthesis. Functionally, catalyzes the decarboxylative condensation of pimeloyl-[acyl-carrier protein] and L-alanine to produce 8-amino-7-oxononanoate (AON), [acyl-carrier protein], and carbon dioxide. The chain is Putative 8-amino-7-oxononanoate synthase (bioF) from Neisseria meningitidis serogroup C (strain 053442).